The chain runs to 138 residues: DNA-directed RNA polymerase subunit omega (138 aa).

The protein belongs to the RNA polymerase subunit omega family. In terms of assembly, the RNAP catalytic core consists of 2 alpha, 1 beta, 1 beta' and 1 omega subunit. When a sigma factor is associated with the core the holoenzyme is formed, which can initiate transcription.

It carries out the reaction RNA(n) + a ribonucleoside 5'-triphosphate = RNA(n+1) + diphosphate. Functionally, promotes RNA polymerase assembly. Latches the N- and C-terminal regions of the beta' subunit thereby facilitating its interaction with the beta and alpha subunits. The sequence is that of DNA-directed RNA polymerase subunit omega from Thermodesulfovibrio yellowstonii (strain ATCC 51303 / DSM 11347 / YP87).